Consider the following 369-residue polypeptide: Actin-related protein 2/3 complex subunit 1B-A (369 aa).

WD repeat units lie at residues 6–45, 50–89, 94–135, 140–179, 200–239, 242–282, and 321–364; these read FLLE…WSKI, EHNG…WKPT, RINR…WVCK, PIRS…VEER, SSCG…RVTS, TDTL…LSFG, and LHKN…SAMK.

It belongs to the WD repeat ARPC1 family. As to quaternary structure, component of the Arp2/3 complex composed of actr2/arp2, actr3/arp3, arpc1 (arpc1a or arpc1b), arpc2, arpc3, arpc4 and arpc5.

Its subcellular location is the cytoplasm. It is found in the cytoskeleton. It localises to the nucleus. Its function is as follows. Component of the Arp2/3 complex, a multiprotein complex that mediates actin polymerization upon stimulation by nucleation-promoting factor (NPF). The Arp2/3 complex mediates the formation of branched actin networks in the cytoplasm, providing the force for cell motility. In addition to its role in the cytoplasmic cytoskeleton, the Arp2/3 complex also promotes actin polymerization in the nucleus, thereby regulating gene transcription and repair of damaged DNA. The Arp2/3 complex promotes homologous recombination (HR) repair in response to DNA damage by promoting nuclear actin polymerization, leading to drive motility of double-strand breaks (DSBs). The protein is Actin-related protein 2/3 complex subunit 1B-A (arpc1b-a) of Xenopus laevis (African clawed frog).